The chain runs to 338 residues: MIKQLYKNITICTLALSTTFTVLPATSYAKINSEIKAVSEKNLDGDTKMYTRTATTSDSQKNITQSLQFNFLTEPNYDKETVFIKAKGTIGSGLRILDPNGYWNSTLRWPGSYSVSIQNVDDNNNTNVTDFAPKNQDESREVKYTYGYKTGGDFSINRGGLTGNITKESNYSETISYQQPSYRTLLDQSTSHKGVGWKVEAHLINNMGHDHTRQLTNDSDNRTKSEIFSLTRNGNLWAKDNFTPKNKMPVTVSEGFNPEFLAVMSHDKKDEGKSKFVVHYKRSMDEFKIDWNRHGFWGYWSGENHVDKKEEKLSALYEVDWKTHNVKFVKVLNDNEKK.

Positions 1-29 (MIKQLYKNITICTLALSTTFTVLPATSYA) are cleaved as a signal peptide.

This sequence belongs to the aerolysin family.

This is an uncharacterized protein from Staphylococcus aureus (strain MSSA476).